We begin with the raw amino-acid sequence, 536 residues long: Nuclear hormone receptor family member nhr-7 (536 aa).

Positions 6–82 (NRICAVCGDT…VGMNPDYVRP (77 aa)) form a DNA-binding region, nuclear receptor. NR C4-type zinc fingers lie at residues 9 to 29 (CAVC…CFGC) and 46 to 70 (CRFE…FRKC). Residues 155–378 (ADRSLARKTG…PFHKILTDII (224 aa)) enclose the NR LBD domain. The segment at 427–465 (SPCQISAPPPPQQQYTDYSQMPSTSSYPANSSPFQSPYR) is disordered. A compositionally biased stretch (polar residues) spans 439 to 465 (QQYTDYSQMPSTSSYPANSSPFQSPYR).

The protein belongs to the nuclear hormone receptor family.

It is found in the nucleus. Functionally, orphan nuclear receptor. This is Nuclear hormone receptor family member nhr-7 (nhr-7) from Caenorhabditis elegans.